The following is a 707-amino-acid chain: Acetyl-coenzyme A synthetase 1 (707 aa).

CoA-binding positions include 242 to 245 (RGGK) and T361. ATP-binding positions include 437–439 (GEP), 461–466 (DTYWQT), D553, and R568. Residue S576 participates in CoA binding. R579 serves as a coordination point for ATP. Position 644 (R644) interacts with CoA. The Microbody targeting signal motif lies at 705–707 (VKL).

This sequence belongs to the ATP-dependent AMP-binding enzyme family.

Its subcellular location is the microsome. The protein localises to the endoplasmic reticulum. It catalyses the reaction acetate + ATP + CoA = acetyl-CoA + AMP + diphosphate. May be required for assimilation of ethanol and acetate. The chain is Acetyl-coenzyme A synthetase 1 (ACS1) from Kluyveromyces lactis (strain ATCC 8585 / CBS 2359 / DSM 70799 / NBRC 1267 / NRRL Y-1140 / WM37) (Yeast).